A 733-amino-acid polypeptide reads, in one-letter code: Photosystem I P700 chlorophyll a apoprotein A2 (733 aa).

The next 8 helical transmembrane spans lie at 46-69 (IFASHFGHLAIIFLWTSGTLFHVA), 135-158 (LYQGAVFLLILSSLFLFAGWLHLQ), 175-199 (LNHHLAGLFGVSSLAWTGHLVHVAI), 273-291 (IAHHHLAIAVLFIIAGHMY), 330-353 (LHFQLGLALASLGVITSLVAQHMY), 369-395 (AALYTHHQYIAGFLMVGAFAHGAIFFV), 417-439 (ALISHLSWVSLFLGFHTLGLYVH), and 516-534 (FLVHHAIALGLHTTTLILV). Residues C558 and C567 each coordinate [4Fe-4S] cluster. 2 helical membrane-spanning segments follow: residues 574-595 (AFYLAMFWMLNTLGWLTFYWHW) and 642-664 (LSVWAWMFLFGHLVWATGFMFLI). Chlorophyll a is bound by residues H653, M661, and Y669. Position 670 (W670) interacts with phylloquinone. A helical membrane pass occupies residues 706-726 (LVGLAHFTVGYVLTYAAFLIA).

The protein belongs to the PsaA/PsaB family. In terms of assembly, the PsaA/B heterodimer binds the P700 chlorophyll special pair and subsequent electron acceptors. PSI consists of a core antenna complex that captures photons, and an electron transfer chain that converts photonic excitation into a charge separation. The cyanobacterial PSI reaction center is composed of one copy each of PsaA,B,C,D,E,F,I,J,K,L,M and X, and forms trimeric complexes. Requires PSI electron transfer chain: 5 chlorophyll a, 1 chlorophyll a', 2 phylloquinones and 3 4Fe-4S clusters. PSI core antenna: 90 chlorophyll a, 22 carotenoids, 3 phospholipids and 1 galactolipid. P700 is a chlorophyll a/chlorophyll a' dimer, A0 is one or more chlorophyll a, A1 is one or both phylloquinones and FX is a shared 4Fe-4S iron-sulfur center. as cofactor.

It is found in the cellular thylakoid membrane. The catalysed reaction is reduced [plastocyanin] + hnu + oxidized [2Fe-2S]-[ferredoxin] = oxidized [plastocyanin] + reduced [2Fe-2S]-[ferredoxin]. Functionally, psaA and PsaB bind P700, the primary electron donor of photosystem I (PSI), as well as the electron acceptors A0, A1 and FX. PSI is a plastocyanin/cytochrome c6-ferredoxin oxidoreductase, converting photonic excitation into a charge separation, which transfers an electron from the donor P700 chlorophyll pair to the spectroscopically characterized acceptors A0, A1, FX, FA and FB in turn. Oxidized P700 is reduced on the lumenal side of the thylakoid membrane by plastocyanin or cytochrome c6. The chain is Photosystem I P700 chlorophyll a apoprotein A2 from Picosynechococcus sp. (strain ATCC 27264 / PCC 7002 / PR-6) (Agmenellum quadruplicatum).